A 567-amino-acid polypeptide reads, in one-letter code: Proline--tRNA ligase (567 aa).

It belongs to the class-II aminoacyl-tRNA synthetase family. ProS type 1 subfamily. Homodimer.

Its subcellular location is the cytoplasm. The catalysed reaction is tRNA(Pro) + L-proline + ATP = L-prolyl-tRNA(Pro) + AMP + diphosphate. In terms of biological role, catalyzes the attachment of proline to tRNA(Pro) in a two-step reaction: proline is first activated by ATP to form Pro-AMP and then transferred to the acceptor end of tRNA(Pro). As ProRS can inadvertently accommodate and process non-cognate amino acids such as alanine and cysteine, to avoid such errors it has two additional distinct editing activities against alanine. One activity is designated as 'pretransfer' editing and involves the tRNA(Pro)-independent hydrolysis of activated Ala-AMP. The other activity is designated 'posttransfer' editing and involves deacylation of mischarged Ala-tRNA(Pro). The misacylated Cys-tRNA(Pro) is not edited by ProRS. The sequence is that of Proline--tRNA ligase from Staphylococcus aureus (strain bovine RF122 / ET3-1).